A 254-amino-acid polypeptide reads, in one-letter code: Isoprenyl transferase (254 aa).

The active site involves Asp24. Residue Asp24 participates in Mg(2+) binding. Residues 25 to 28 (GNGR), Trp29, Arg37, His41, and 69 to 71 (SSE) each bind substrate. Asn72 functions as the Proton acceptor in the catalytic mechanism. Residues Trp73, Arg75, Arg192, and 198–200 (RIS) contribute to the substrate site. Glu211 serves as a coordination point for Mg(2+).

Belongs to the UPP synthase family. In terms of assembly, homodimer. Requires Mg(2+) as cofactor.

Catalyzes the condensation of isopentenyl diphosphate (IPP) with allylic pyrophosphates generating different type of terpenoids. In Bordetella parapertussis (strain 12822 / ATCC BAA-587 / NCTC 13253), this protein is Isoprenyl transferase.